An 83-amino-acid chain; its full sequence is MALMQATHTIEGFLAVETHPRAFVAENGHVITRLSATKWGGWEGLEILEYSGDGQVEVSDEQLAEAEHASQIEAQIIAEAAAE.

The chain is Gene 3 protein (3) from Mycobacterium (Mycobacteriophage D29).